The following is a 339-amino-acid chain: Biotin synthase (339 aa).

The 228-residue stretch at threonine 51 to arginine 278 folds into the Radical SAM core domain. [4Fe-4S] cluster is bound by residues cysteine 66, cysteine 70, and cysteine 73. [2Fe-2S] cluster contacts are provided by cysteine 110, cysteine 141, cysteine 201, and arginine 273.

This sequence belongs to the radical SAM superfamily. Biotin synthase family. In terms of assembly, homodimer. [4Fe-4S] cluster is required as a cofactor. Requires [2Fe-2S] cluster as cofactor.

The catalysed reaction is (4R,5S)-dethiobiotin + (sulfur carrier)-SH + 2 reduced [2Fe-2S]-[ferredoxin] + 2 S-adenosyl-L-methionine = (sulfur carrier)-H + biotin + 2 5'-deoxyadenosine + 2 L-methionine + 2 oxidized [2Fe-2S]-[ferredoxin]. The protein operates within cofactor biosynthesis; biotin biosynthesis; biotin from 7,8-diaminononanoate: step 2/2. In terms of biological role, catalyzes the conversion of dethiobiotin (DTB) to biotin by the insertion of a sulfur atom into dethiobiotin via a radical-based mechanism. The sequence is that of Biotin synthase from Janthinobacterium sp. (strain Marseille) (Minibacterium massiliensis).